Here is a 187-residue protein sequence, read N- to C-terminus: Auxin-binding protein T85 (187 aa).

The first 20 residues, 1–20, serve as a signal peptide directing secretion; sequence MARHVLVVVAVLLFATAEAS. The cysteines at positions 22 and 177 are disulfide-linked. Residues His-78, His-80, and Glu-84 each contribute to the Zn(2+) site. Asn-117 carries an N-linked (GlcNAc...) asparagine glycan. Residue His-128 coordinates Zn(2+). The short motif at 184 to 187 is the Prevents secretion from ER element; it reads KDEL.

As to quaternary structure, homodimer.

It localises to the endoplasmic reticulum lumen. Its function is as follows. This is probably a receptor for the plant hormone auxin. In Nicotiana tabacum (Common tobacco), this protein is Auxin-binding protein T85 (T85).